The chain runs to 224 residues: 7-cyano-7-deazaguanine synthase (224 aa).

ATP is bound at residue 10–20 (LSGGLDSATVV). The Zn(2+) site is built by Cys189, Cys199, Cys202, and Cys205.

The protein belongs to the QueC family. It depends on Zn(2+) as a cofactor.

It carries out the reaction 7-carboxy-7-deazaguanine + NH4(+) + ATP = 7-cyano-7-deazaguanine + ADP + phosphate + H2O + H(+). It participates in purine metabolism; 7-cyano-7-deazaguanine biosynthesis. Catalyzes the ATP-dependent conversion of 7-carboxy-7-deazaguanine (CDG) to 7-cyano-7-deazaguanine (preQ(0)). The chain is 7-cyano-7-deazaguanine synthase from Pseudomonas aeruginosa (strain LESB58).